The following is a 277-amino-acid chain: Urease accessory protein UreD (277 aa).

This sequence belongs to the UreD family. As to quaternary structure, ureD, UreF and UreG form a complex that acts as a GTP-hydrolysis-dependent molecular chaperone, activating the urease apoprotein by helping to assemble the nickel containing metallocenter of UreC. The UreE protein probably delivers the nickel.

The protein resides in the cytoplasm. Functionally, required for maturation of urease via the functional incorporation of the urease nickel metallocenter. The chain is Urease accessory protein UreD from Rhodopseudomonas palustris (strain BisB18).